The following is a 485-amino-acid chain: Retron Mx162 reverse transcriptase (485 aa).

Residues 1-33 (MTARLDPFVPAASPQAVPTPELTAPSSDAAAKR) form a disordered region. A Reverse transcriptase domain is found at 167-407 (RWFAFHREVD…TRQRVTGLVV (241 aa)). Mg(2+)-binding residues include aspartate 250, aspartate 346, and aspartate 347.

It belongs to the bacterial reverse transcriptase family.

The enzyme catalyses DNA(n) + a 2'-deoxyribonucleoside 5'-triphosphate = DNA(n+1) + diphosphate. MsDNA synthesis is inhibited by rifampicin and chloramphenicol. Reverse transcriptase (RT) responsible for synthesis of msDNA-Mx162 (a branched molecule with RNA linked by a 2',5'-phosphodiester bond to ssDNA). The retron transcript serves as primer (from a conserved internal G residue) and template for the reaction, and codes for the RT. The retron is involved in antiviral defense. The chain is Retron Mx162 reverse transcriptase from Myxococcus xanthus.